The following is an 89-amino-acid chain: Small ribosomal subunit protein uS15 (89 aa).

This sequence belongs to the universal ribosomal protein uS15 family. Part of the 30S ribosomal subunit. Forms a bridge to the 50S subunit in the 70S ribosome, contacting the 23S rRNA.

Functionally, one of the primary rRNA binding proteins, it binds directly to 16S rRNA where it helps nucleate assembly of the platform of the 30S subunit by binding and bridging several RNA helices of the 16S rRNA. In terms of biological role, forms an intersubunit bridge (bridge B4) with the 23S rRNA of the 50S subunit in the ribosome. This is Small ribosomal subunit protein uS15 from Methylocella silvestris (strain DSM 15510 / CIP 108128 / LMG 27833 / NCIMB 13906 / BL2).